A 336-amino-acid polypeptide reads, in one-letter code: MAFADRLLAAWYAGHPALALLRPLEALYRRVVTRKRARFLSGESASYRAPVPVIVVGNITVGGTGKTPMILWLIEHCRRQGLKVGVVSRGYGAKPPQHPWHVQADQPAEQAGDEPLLIVQRTGVPLVIDPDRSRAVQALLASDAPDLILCDDGMQHYRLARDLELVLIDAVRGLGNRRCLPAGPLREPAERLGEADAVLFNGAEADRDDGFSFRLQPSALINLRSGERRALDLFPAGQALHAVAGIGNPQRFFNTLLGLNWQPVPHPFADHAPYSREVLSFSPPLPLVMTEKDAVKCRPFAADDWWYLAVDAVPSAAFSAWFDGQLDRLLPGRPRP.

Position 60–67 (60–67) interacts with ATP; it reads TVGGTGKT.

This sequence belongs to the LpxK family.

The catalysed reaction is a lipid A disaccharide + ATP = a lipid IVA + ADP + H(+). Its pathway is glycolipid biosynthesis; lipid IV(A) biosynthesis; lipid IV(A) from (3R)-3-hydroxytetradecanoyl-[acyl-carrier-protein] and UDP-N-acetyl-alpha-D-glucosamine: step 6/6. Transfers the gamma-phosphate of ATP to the 4'-position of a tetraacyldisaccharide 1-phosphate intermediate (termed DS-1-P) to form tetraacyldisaccharide 1,4'-bis-phosphate (lipid IVA). The polypeptide is Tetraacyldisaccharide 4'-kinase (Pseudomonas entomophila (strain L48)).